The primary structure comprises 176 residues: Large ribosomal subunit protein uL10 (176 aa).

Belongs to the universal ribosomal protein uL10 family. Part of the ribosomal stalk of the 50S ribosomal subunit. The N-terminus interacts with L11 and the large rRNA to form the base of the stalk. The C-terminus forms an elongated spine to which L12 dimers bind in a sequential fashion forming a multimeric L10(L12)X complex.

In terms of biological role, forms part of the ribosomal stalk, playing a central role in the interaction of the ribosome with GTP-bound translation factors. This Marinobacter nauticus (strain ATCC 700491 / DSM 11845 / VT8) (Marinobacter aquaeolei) protein is Large ribosomal subunit protein uL10.